Here is a 498-residue protein sequence, read N- to C-terminus: Protein MGF 505-5R (498 aa).

It belongs to the asfivirus MGF 505 family.

Its function is as follows. Plays a role in virus cell tropism, and may be required for efficient virus replication in macrophages. The polypeptide is Protein MGF 505-5R (Ornithodoros (relapsing fever ticks)).